A 779-amino-acid chain; its full sequence is Catalase-peroxidase (779 aa).

Positions 148–270 (WHSAGTYRIT…LGAVQMGLIY (123 aa)) form a cross-link, tryptophyl-tyrosyl-methioninium (Trp-Tyr) (with M-296). Catalysis depends on H149, which acts as the Proton acceptor. Positions 270–296 (YVNPEGPNGKPDPIAAAKDIRETFFRM) form a cross-link, tryptophyl-tyrosyl-methioninium (Tyr-Met) (with W-148). Residue H311 coordinates heme b.

This sequence belongs to the peroxidase family. Peroxidase/catalase subfamily. As to quaternary structure, homodimer or homotetramer. The cofactor is heme b. Post-translationally, formation of the three residue Trp-Tyr-Met cross-link is important for the catalase, but not the peroxidase activity of the enzyme.

It carries out the reaction H2O2 + AH2 = A + 2 H2O. It catalyses the reaction 2 H2O2 = O2 + 2 H2O. Bifunctional enzyme with both catalase and broad-spectrum peroxidase activity. In Bradyrhizobium diazoefficiens (strain JCM 10833 / BCRC 13528 / IAM 13628 / NBRC 14792 / USDA 110), this protein is Catalase-peroxidase.